Consider the following 377-residue polypeptide: tRNA-specific 2-thiouridylase MnmA (377 aa).

ATP contacts are provided by residues 18 to 25 and Met44; that span reads AMSGGVDS. The Nucleophile role is filled by Cys113. Residues Cys113 and Cys210 are joined by a disulfide bond. Residue Gly137 participates in ATP binding. Residues 159–161 form an interaction with tRNA region; the sequence is RDQ. Cys210 serves as the catalytic Cysteine persulfide intermediate.

It belongs to the MnmA/TRMU family.

The protein localises to the cytoplasm. It carries out the reaction S-sulfanyl-L-cysteinyl-[protein] + uridine(34) in tRNA + AH2 + ATP = 2-thiouridine(34) in tRNA + L-cysteinyl-[protein] + A + AMP + diphosphate + H(+). Its function is as follows. Catalyzes the 2-thiolation of uridine at the wobble position (U34) of tRNA, leading to the formation of s(2)U34. This Rhodospirillum rubrum (strain ATCC 11170 / ATH 1.1.1 / DSM 467 / LMG 4362 / NCIMB 8255 / S1) protein is tRNA-specific 2-thiouridylase MnmA.